We begin with the raw amino-acid sequence, 557 residues long: 2-isopropylmalate synthase (557 aa).

Residues 33-307 (PIWCSSDLRD…DPQLDFSDID (275 aa)) enclose the Pyruvate carboxyltransferase domain. Mg(2+) contacts are provided by D42, H246, H248, and N282. A regulatory domain region spans residues 439 to 557 (ANAPYALVSH…SLSQQEAKAA (119 aa)).

The protein belongs to the alpha-IPM synthase/homocitrate synthase family. LeuA type 2 subfamily. In terms of assembly, homodimer. Mg(2+) is required as a cofactor.

Its subcellular location is the cytoplasm. The catalysed reaction is 3-methyl-2-oxobutanoate + acetyl-CoA + H2O = (2S)-2-isopropylmalate + CoA + H(+). It functions in the pathway amino-acid biosynthesis; L-leucine biosynthesis; L-leucine from 3-methyl-2-oxobutanoate: step 1/4. Functionally, catalyzes the condensation of the acetyl group of acetyl-CoA with 3-methyl-2-oxobutanoate (2-ketoisovalerate) to form 3-carboxy-3-hydroxy-4-methylpentanoate (2-isopropylmalate). The sequence is that of 2-isopropylmalate synthase from Pseudomonas putida (strain GB-1).